We begin with the raw amino-acid sequence, 687 residues long: UvrABC system protein B (687 aa).

The Helicase ATP-binding domain occupies 26-414 (EGLAAGEMYQ…GAVIEQVVRP (389 aa)). Residue 39-46 (GVTGSGKT) coordinates ATP. The Beta-hairpin signature appears at 92-115 (YYDYYQPEAYVPASDTYIGKDASV). The Helicase C-terminal domain maps to 430–596 (QVDDLLSEIR…GIQKAVREII (167 aa)). Positions 630 to 665 (AKRLQQLERQMHKHAQNLEFEQAARLRDEIKRIKGW) constitute a UVR domain.

The protein belongs to the UvrB family. Forms a heterotetramer with UvrA during the search for lesions. Interacts with UvrC in an incision complex.

It is found in the cytoplasm. The UvrABC repair system catalyzes the recognition and processing of DNA lesions. A damage recognition complex composed of 2 UvrA and 2 UvrB subunits scans DNA for abnormalities. Upon binding of the UvrA(2)B(2) complex to a putative damaged site, the DNA wraps around one UvrB monomer. DNA wrap is dependent on ATP binding by UvrB and probably causes local melting of the DNA helix, facilitating insertion of UvrB beta-hairpin between the DNA strands. Then UvrB probes one DNA strand for the presence of a lesion. If a lesion is found the UvrA subunits dissociate and the UvrB-DNA preincision complex is formed. This complex is subsequently bound by UvrC and the second UvrB is released. If no lesion is found, the DNA wraps around the other UvrB subunit that will check the other stand for damage. This is UvrABC system protein B from Nitrosococcus oceani (strain ATCC 19707 / BCRC 17464 / JCM 30415 / NCIMB 11848 / C-107).